The sequence spans 589 residues: Protein kinase G11A (589 aa).

The tract at residues Met-1–Thr-167 is disordered. 2 stretches are compositionally biased toward polar residues: residues Asn-15–Lys-36 and Thr-63–Asn-76. Positions Arg-91–Val-100 are enriched in basic and acidic residues. A compositionally biased stretch (low complexity) spans Ser-142 to Ser-165. One can recognise a Protein kinase domain in the interval Phe-195–Phe-533. Residues Leu-201–Val-209 and Lys-224 contribute to the ATP site. Asp-320 acts as the Proton acceptor in catalysis. The segment at Arg-551–Phe-589 is disordered.

The protein belongs to the protein kinase superfamily. Ser/Thr protein kinase family.

The catalysed reaction is L-seryl-[protein] + ATP = O-phospho-L-seryl-[protein] + ADP + H(+). The enzyme catalyses L-threonyl-[protein] + ATP = O-phospho-L-threonyl-[protein] + ADP + H(+). In terms of biological role, may play a role in the regulation of metabolism and signal transduction processes. This Oryza sativa subsp. japonica (Rice) protein is Protein kinase G11A.